Consider the following 274-residue polypeptide: Bis(5'-nucleosyl)-tetraphosphatase, symmetrical (274 aa).

This sequence belongs to the Ap4A hydrolase family.

It catalyses the reaction P(1),P(4)-bis(5'-adenosyl) tetraphosphate + H2O = 2 ADP + 2 H(+). Its function is as follows. Hydrolyzes diadenosine 5',5'''-P1,P4-tetraphosphate to yield ADP. The protein is Bis(5'-nucleosyl)-tetraphosphatase, symmetrical of Shewanella sp. (strain ANA-3).